Consider the following 273-residue polypeptide: Transposon Tn7 transposition protein TnsA (273 aa).

Residues Glu-63 and Glu-73 contribute to the active site. Positions 90 to 108 (TRQIAIDSGIKHPVIRGVD) form a DNA-binding region, H-T-H motif. Asp-114 is an active-site residue. Asp-114, Gln-130, and Val-131 together coordinate Mg(2+). The active site involves Lys-132.

In terms of assembly, heteromer with TnsB. Interacts with TnsC (via C-terminus); this interaction allows TnsA to bind donor DNA. Requires Mg(2+) as cofactor. The cofactor is Mn(2+).

Its function is as follows. Required for Tn7 transposition. Forms the transposase, together with TnsB. TnsA executes the 5'-DNA strand breakage reaction. TnsABC and TnsD promote high-frequency insertion of Tn7 into a specific target site known as att-Tn7 whereas TnsABC and TnsE promote low-frequency insertion into many different sites. The chain is Transposon Tn7 transposition protein TnsA from Escherichia coli.